Reading from the N-terminus, the 466-residue chain is 23S rRNA (uracil(1939)-C(5))-methyltransferase RlmD (466 aa).

The tract at residues 1–22 (MSSQPNPTSHPEAASAASAASN) is disordered. A TRAM domain is found at 17 to 81 (ASAASNDPVV…PSYEQAHLVE (65 aa)). Positions 94, 100, 103, and 182 each coordinate [4Fe-4S] cluster. S-adenosyl-L-methionine-binding residues include glutamine 290, phenylalanine 319, asparagine 324, glutamate 340, asparagine 368, and aspartate 389. Cysteine 422 serves as the catalytic Nucleophile.

Belongs to the class I-like SAM-binding methyltransferase superfamily. RNA M5U methyltransferase family. RlmD subfamily.

It catalyses the reaction uridine(1939) in 23S rRNA + S-adenosyl-L-methionine = 5-methyluridine(1939) in 23S rRNA + S-adenosyl-L-homocysteine + H(+). Functionally, catalyzes the formation of 5-methyl-uridine at position 1939 (m5U1939) in 23S rRNA. The sequence is that of 23S rRNA (uracil(1939)-C(5))-methyltransferase RlmD from Cupriavidus metallidurans (strain ATCC 43123 / DSM 2839 / NBRC 102507 / CH34) (Ralstonia metallidurans).